The primary structure comprises 492 residues: N-succinylglutamate 5-semialdehyde dehydrogenase (492 aa).

220–225 contributes to the NAD(+) binding site; that stretch reads GSASTG. Active-site residues include E243 and C277.

The protein belongs to the aldehyde dehydrogenase family. AstD subfamily.

The enzyme catalyses N-succinyl-L-glutamate 5-semialdehyde + NAD(+) + H2O = N-succinyl-L-glutamate + NADH + 2 H(+). The protein operates within amino-acid degradation; L-arginine degradation via AST pathway; L-glutamate and succinate from L-arginine: step 4/5. Its function is as follows. Catalyzes the NAD-dependent reduction of succinylglutamate semialdehyde into succinylglutamate. In Salmonella gallinarum (strain 287/91 / NCTC 13346), this protein is N-succinylglutamate 5-semialdehyde dehydrogenase.